Consider the following 124-residue polypeptide: MPTINQLVRKGRRDKTAKVKTAALKGSPQRRGVCTRVYTTTPKKPNSALRKVARVRLTSSVEVTAYIPGEGHNLQEHSMVLVRGGRVKDLPGVRYKIIRGSLDTQGVKGRKQARSRYGAKKEKS.

The disordered stretch occupies residues 1–32 (MPTINQLVRKGRRDKTAKVKTAALKGSPQRRG). Asp-89 is subject to 3-methylthioaspartic acid. The segment at 104-124 (TQGVKGRKQARSRYGAKKEKS) is disordered. Residues 108-118 (KGRKQARSRYG) are compositionally biased toward basic residues.

Belongs to the universal ribosomal protein uS12 family. As to quaternary structure, part of the 30S ribosomal subunit. Contacts proteins S8 and S17. May interact with IF1 in the 30S initiation complex.

With S4 and S5 plays an important role in translational accuracy. Functionally, interacts with and stabilizes bases of the 16S rRNA that are involved in tRNA selection in the A site and with the mRNA backbone. Located at the interface of the 30S and 50S subunits, it traverses the body of the 30S subunit contacting proteins on the other side and probably holding the rRNA structure together. The combined cluster of proteins S8, S12 and S17 appears to hold together the shoulder and platform of the 30S subunit. This chain is Small ribosomal subunit protein uS12, found in Rhodococcus jostii (strain RHA1).